The primary structure comprises 324 residues: MARSKISVIGAGAVGATVAQTLAIRQTGDIYIFDIVDGLAEGKALDILEGAPHWGYDLDIKGFCTADESKYAEMKGSDVIVVTAGLARKPGMSRDDLLLKNIGIMKSVGEAIKKYSPESKIVVVTNPADIMAYAIYKASGISPERIIGLGGSLDSTRFRTFLAQELNVSFEDVNAFVIGGHGDDMVPFIRYSNVSGIPIEDLLPREKIDEIVKRTRFGGGEIVNLYKTGSAFYAPGISIAVMVESIVNDRKRVIPCAAYITGEHSKTYLVNNLFIGVPIKIGKNGVEKIYDLKFNEDELEAWKKSVESVKKNSAIADDYFAKNQ.

NAD(+)-binding positions include 10 to 15 (GAGAVG) and Asp-34. The substrate site is built by Arg-88 and Arg-94. NAD(+) is bound by residues Asn-101 and 124–126 (VTN). Residues Asn-126 and Arg-157 each coordinate substrate. The Proton acceptor role is filled by His-181.

The protein belongs to the LDH/MDH superfamily.

The catalysed reaction is (S)-malate + NAD(+) = oxaloacetate + NADH + H(+). In terms of biological role, catalyzes the reversible oxidation of malate to oxaloacetate. The polypeptide is Malate dehydrogenase (mdh) (Picrophilus torridus (strain ATCC 700027 / DSM 9790 / JCM 10055 / NBRC 100828 / KAW 2/3)).